Here is a 385-residue protein sequence, read N- to C-terminus: S-adenosylmethionine synthase (385 aa).

ATP is bound at residue H16. A Mg(2+)-binding site is contributed by D18. E44 contacts K(+). The L-methionine site is built by E57 and Q100. Residues 100-110 form a flexible loop region; sequence QSPDINQGVDR. ATP-binding positions include 164-166, 230-231, D239, 245-246, A262, and K266; these read DGK, KF, and RK. L-methionine is bound at residue D239. Residue K270 participates in L-methionine binding.

Belongs to the AdoMet synthase family. As to quaternary structure, homotetramer; dimer of dimers. The cofactor is Mg(2+). Requires K(+) as cofactor.

Its subcellular location is the cytoplasm. The catalysed reaction is L-methionine + ATP + H2O = S-adenosyl-L-methionine + phosphate + diphosphate. It participates in amino-acid biosynthesis; S-adenosyl-L-methionine biosynthesis; S-adenosyl-L-methionine from L-methionine: step 1/1. Functionally, catalyzes the formation of S-adenosylmethionine (AdoMet) from methionine and ATP. The overall synthetic reaction is composed of two sequential steps, AdoMet formation and the subsequent tripolyphosphate hydrolysis which occurs prior to release of AdoMet from the enzyme. The polypeptide is S-adenosylmethionine synthase (Helicobacter pylori (strain J99 / ATCC 700824) (Campylobacter pylori J99)).